The following is a 220-amino-acid chain: Fructose-6-phosphate aldolase (220 aa).

Lys-85 acts as the Schiff-base intermediate with substrate in catalysis.

This sequence belongs to the transaldolase family. Type 3A subfamily. As to quaternary structure, homodecamer.

The protein resides in the cytoplasm. The catalysed reaction is beta-D-fructose 6-phosphate = dihydroxyacetone + D-glyceraldehyde 3-phosphate. Catalyzes the reversible formation of fructose 6-phosphate from dihydroxyacetone and D-glyceraldehyde 3-phosphate via an aldolization reaction. The protein is Fructose-6-phosphate aldolase of Salmonella agona (strain SL483).